A 178-amino-acid chain; its full sequence is Cytochrome b6-f complex iron-sulfur subunit 2 (178 aa).

The chain crosses the membrane as a helical span at residues 17–36 (LLNFFTGAIVAATASAAIYP). A Rieske domain is found at 61–161 (GHPIPASQIL…VQVKDDYIWI (101 aa)). [2Fe-2S] cluster is bound by residues Cys107, His109, Cys125, and His128. Cys112 and Cys127 form a disulfide bridge.

Belongs to the Rieske iron-sulfur protein family. In terms of assembly, the 4 large subunits of the cytochrome b6-f complex are cytochrome b6, subunit IV (17 kDa polypeptide, PetD), cytochrome f and the Rieske protein, while the 4 small subunits are PetG, PetL, PetM and PetN. The complex functions as a dimer. [2Fe-2S] cluster is required as a cofactor.

Its subcellular location is the cellular thylakoid membrane. The enzyme catalyses 2 oxidized [plastocyanin] + a plastoquinol + 2 H(+)(in) = 2 reduced [plastocyanin] + a plastoquinone + 4 H(+)(out). Component of the cytochrome b6-f complex, which mediates electron transfer between photosystem II (PSII) and photosystem I (PSI), cyclic electron flow around PSI, and state transitions. This chain is Cytochrome b6-f complex iron-sulfur subunit 2, found in Trichormus variabilis (strain ATCC 29413 / PCC 7937) (Anabaena variabilis).